The following is a 788-amino-acid chain: Probable potassium transporter 9 (788 aa).

Over 1–21 (MDPEFGRGMAPRKREPWRTTL) the chain is Cytoplasmic. Residues 22–42 (LLAYQSLGVVYGDLSISPLYV) traverse the membrane as a helical segment. Over 43-59 (YKSTFAEDITHSESNEE) the chain is Extracellular. Residues 60–80 (IFGVLSFVFWTLTLIPLIKYV) form a helical membrane-spanning segment. The Cytoplasmic portion of the chain corresponds to 81–151 (SIVLRADDNG…EKHKTLQTAL (71 aa)). Residues 152–172 (LIMVMIGTCMVIGDGVLTPAI) form a helical membrane-spanning segment. Residues 173-191 (SVFSAVSGLELSLSRDQHE) lie on the Extracellular side of the membrane. The helical transmembrane segment at 192–212 (YAVIPITCVILVFLFALQHYG) threads the bilayer. Residues 213-215 (THR) are Cytoplasmic-facing. The helical transmembrane segment at 216–236 (VGFLFAPIVLAWLICMSMLGL) threads the bilayer. At 237–264 (YNIIHWNPQVYRALNPYYMLKFLRKTKK) the chain is on the extracellular side. Residues 265 to 285 (SGWMSLGGILLCMTGSEAMFA) form a helical membrane-spanning segment. Residues 286 to 292 (DLGHFSY) lie on the Cytoplasmic side of the membrane. A helical membrane pass occupies residues 293–313 (SAIQLAFTTLVYPALILGYMG). Residues 314–343 (QAAYLSKHHTLNSTYQIGYYISVPESVRWP) lie on the Extracellular side of the membrane. N-linked (GlcNAc...) asparagine glycosylation is present at Asn-325. Residues 344–364 (VLVLAILASVVGSQAIISGTF) form a helical membrane-spanning segment. Over 365–391 (SIINQSQSLSCFPRVKVVHTSENIHGQ) the chain is Cytoplasmic. The helical transmembrane segment at 392–412 (IYIPEINWLLMVLCIAVTVGF) threads the bilayer. Residues 413-422 (RDTKHMGNAS) lie on the Extracellular side of the membrane. Residue Asn-420 is glycosylated (N-linked (GlcNAc...) asparagine). Residues 423–443 (GLAVITVMLVTTCLTSLVIML) form a helical membrane-spanning segment. At 444–451 (CWHRSPAL) the chain is on the cytoplasmic side. A helical transmembrane segment spans residues 452 to 472 (ALVFFLFFGSIEVLYFSASLI). Over 473 to 476 (KFRE) the chain is Extracellular. The helical transmembrane segment at 477 to 497 (GAWLPIMLALILMAVMFIWHH) threads the bilayer. The Cytoplasmic portion of the chain corresponds to 498–788 (TTIKKYEFDL…LLEVGMVYVL (291 aa)).

This sequence belongs to the HAK/KUP transporter (TC 2.A.72.3) family.

The protein resides in the membrane. High-affinity potassium transporter. The chain is Probable potassium transporter 9 (HAK9) from Oryza sativa subsp. japonica (Rice).